A 210-amino-acid polypeptide reads, in one-letter code: GEM-like protein 7 (210 aa).

The 79-residue stretch at 88–166 (KIYKRLFKVC…CKINGVNQSQ (79 aa)) folds into the GRAM domain.

The protein belongs to the GEM family.

The protein is GEM-like protein 7 of Arabidopsis thaliana (Mouse-ear cress).